The primary structure comprises 455 residues: Bifunctional protein GlmU (455 aa).

Positions 1–230 (MSNRFAVILA…VEETLGVNDR (230 aa)) are pyrophosphorylase. UDP-N-acetyl-alpha-D-glucosamine contacts are provided by residues 9–12 (LAAG), Lys-23, Gln-73, and 78–79 (GT). Asp-103 is a binding site for Mg(2+). Residues Gly-140, Glu-155, Asn-170, and Asn-228 each contribute to the UDP-N-acetyl-alpha-D-glucosamine site. Asn-228 contacts Mg(2+). Residues 231-251 (VALAQAEQVMKRRINEAWMRK) form a linker region. Positions 252–455 (GVTFIDPEQT…KEHYVTKKNN (204 aa)) are N-acetyltransferase. UDP-N-acetyl-alpha-D-glucosamine is bound by residues Arg-333 and Lys-351. The active-site Proton acceptor is His-363. Residues Tyr-366 and Asn-377 each contribute to the UDP-N-acetyl-alpha-D-glucosamine site. Residues 386–387 (NY), Ala-423, and Arg-440 contribute to the acetyl-CoA site.

It in the N-terminal section; belongs to the N-acetylglucosamine-1-phosphate uridyltransferase family. In the C-terminal section; belongs to the transferase hexapeptide repeat family. Homotrimer. Requires Mg(2+) as cofactor.

The protein localises to the cytoplasm. It catalyses the reaction alpha-D-glucosamine 1-phosphate + acetyl-CoA = N-acetyl-alpha-D-glucosamine 1-phosphate + CoA + H(+). It carries out the reaction N-acetyl-alpha-D-glucosamine 1-phosphate + UTP + H(+) = UDP-N-acetyl-alpha-D-glucosamine + diphosphate. It participates in nucleotide-sugar biosynthesis; UDP-N-acetyl-alpha-D-glucosamine biosynthesis; N-acetyl-alpha-D-glucosamine 1-phosphate from alpha-D-glucosamine 6-phosphate (route II): step 2/2. It functions in the pathway nucleotide-sugar biosynthesis; UDP-N-acetyl-alpha-D-glucosamine biosynthesis; UDP-N-acetyl-alpha-D-glucosamine from N-acetyl-alpha-D-glucosamine 1-phosphate: step 1/1. Its pathway is bacterial outer membrane biogenesis; LPS lipid A biosynthesis. Its function is as follows. Catalyzes the last two sequential reactions in the de novo biosynthetic pathway for UDP-N-acetylglucosamine (UDP-GlcNAc). The C-terminal domain catalyzes the transfer of acetyl group from acetyl coenzyme A to glucosamine-1-phosphate (GlcN-1-P) to produce N-acetylglucosamine-1-phosphate (GlcNAc-1-P), which is converted into UDP-GlcNAc by the transfer of uridine 5-monophosphate (from uridine 5-triphosphate), a reaction catalyzed by the N-terminal domain. The protein is Bifunctional protein GlmU of Halalkalibacterium halodurans (strain ATCC BAA-125 / DSM 18197 / FERM 7344 / JCM 9153 / C-125) (Bacillus halodurans).